The primary structure comprises 413 residues: Protein SLX4IP (413 aa).

Residues Lys61, Lys79, Lys167, Lys176, and Lys236 each participate in a glycyl lysine isopeptide (Lys-Gly) (interchain with G-Cter in SUMO2) cross-link. Disordered regions lie at residues 172–193 and 228–300; these read RTKS…VGRS and SHQE…GSVE. A compositionally biased stretch (polar residues) spans 238-254; sequence ENVSQTQPGDTRSQQQL. Residues Lys288, Lys344, and Lys353 each participate in a glycyl lysine isopeptide (Lys-Gly) (interchain with G-Cter in SUMO2) cross-link. A disordered region spans residues 363 to 413; it reads SSRHLVTNNPGQAQQSDSAAITEQLATDQGGPSKKRKKLQSYNRGCSGKKN. Positions 364 to 389 are enriched in polar residues; sequence SRHLVTNNPGQAQQSDSAAITEQLAT. Thr389 carries the phosphothreonine modification. Residue Lys396 forms a Glycyl lysine isopeptide (Lys-Gly) (interchain with G-Cter in SUMO2) linkage.

This sequence belongs to the SLX4IP family. In terms of assembly, interacts with SLX4/BTBD12; subunit of different structure-specific endonucleases.

The sequence is that of Protein SLX4IP (Slx4ip) from Mus musculus (Mouse).